The following is a 210-amino-acid chain: Uracil phosphoribosyltransferase (210 aa).

Residues Arg78, Arg103, and 130 to 138 (DPMLATGGT) contribute to the 5-phospho-alpha-D-ribose 1-diphosphate site. Uracil-binding positions include Ile193 and 198–200 (GDA). Residue Asp199 coordinates 5-phospho-alpha-D-ribose 1-diphosphate.

It belongs to the UPRTase family. Mg(2+) is required as a cofactor.

It catalyses the reaction UMP + diphosphate = 5-phospho-alpha-D-ribose 1-diphosphate + uracil. Its pathway is pyrimidine metabolism; UMP biosynthesis via salvage pathway; UMP from uracil: step 1/1. With respect to regulation, allosterically activated by GTP. In terms of biological role, catalyzes the conversion of uracil and 5-phospho-alpha-D-ribose 1-diphosphate (PRPP) to UMP and diphosphate. The protein is Uracil phosphoribosyltransferase of Xanthomonas euvesicatoria pv. vesicatoria (strain 85-10) (Xanthomonas campestris pv. vesicatoria).